A 183-amino-acid chain; its full sequence is Large ribosomal subunit protein uL13m (183 aa).

Belongs to the universal ribosomal protein uL13 family. In terms of assembly, component of the mitochondrial large ribosomal subunit (mt-LSU). Mature N.crassa 74S mitochondrial ribosomes consist of a small (37S) and a large (54S) subunit. The 37S small subunit contains a 16S ribosomal RNA (16S mt-rRNA) and 32 different proteins. The 54S large subunit contains a 23S rRNA (23S mt-rRNA) and 42 different proteins.

It is found in the mitochondrion. Its function is as follows. Component of the mitochondrial ribosome (mitoribosome), a dedicated translation machinery responsible for the synthesis of mitochondrial genome-encoded proteins, including at least some of the essential transmembrane subunits of the mitochondrial respiratory chain. The mitoribosomes are attached to the mitochondrial inner membrane and translation products are cotranslationally integrated into the membrane. The polypeptide is Large ribosomal subunit protein uL13m (mrpl23) (Neurospora crassa (strain ATCC 24698 / 74-OR23-1A / CBS 708.71 / DSM 1257 / FGSC 987)).